The primary structure comprises 147 residues: Small ribosomal subunit protein uS9 (147 aa).

The segment at 128 to 147 (KERKKYGQMGARAKYRWSKR) is disordered.

The protein belongs to the universal ribosomal protein uS9 family.

The protein is Small ribosomal subunit protein uS9 (rpsI) of Aquifex aeolicus (strain VF5).